The sequence spans 352 residues: Desmethylxanthohumol 6'-O-methyltransferase (352 aa).

An S-adenosyl-L-methionine-binding site is contributed by D219. The Proton acceptor role is filled by H257.

The protein belongs to the class I-like SAM-binding methyltransferase superfamily. Cation-independent O-methyltransferase family. Homodimer. As to expression, highly expressed in lupulin glands. Detected in early-, mid- and late-stage cones.

The protein localises to the cytoplasm. It carries out the reaction desmethylxanthohumol + S-adenosyl-L-methionine = xanthohumol + S-adenosyl-L-homocysteine + H(+). The enzyme catalyses xanthogalenol + S-adenosyl-L-methionine = 4'-O-methylxanthohumol + S-adenosyl-L-homocysteine + H(+). It participates in secondary metabolite biosynthesis. Its activity is regulated as follows. Inhibited by S-adenosyl homocysteine. Functionally, involved in the biosynthesis of prenylated phenolics natural products which contribute to the bitter taste of beer and display broad biological activities. Catalyzes the biosynthesis of xanthohumol. Methylates desmethylxanthohumol and xanthogalenol, but not caffeic acid, prenylflavanones, simple phenols or phenylpropanoids. The chain is Desmethylxanthohumol 6'-O-methyltransferase from Humulus lupulus (European hop).